A 578-amino-acid chain; its full sequence is Hyaluronan synthase 1 (578 aa).

At M1–T25 the chain is on the cytoplasmic side. Residues I26–L46 traverse the membrane as a helical segment. At A47–G52 the chain is on the extracellular side. A helical membrane pass occupies residues L53–F73. Topologically, residues A74–A399 are cytoplasmic. A helical membrane pass occupies residues W400–L420. The Extracellular segment spans residues R421 to A430. A helical transmembrane segment spans residues L431–W451. The Cytoplasmic segment spans residues L452 to R457. Residues M458–L478 form a helical membrane-spanning segment. The Extracellular segment spans residues A479–A497. A helical transmembrane segment spans residues A498–V518. Over R519 to H540 the chain is Cytoplasmic. Residues L541–V561 form a helical membrane-spanning segment. At G562 to V578 the chain is on the extracellular side.

Belongs to the NodC/HAS family. It depends on Mg(2+) as a cofactor. Widely expressed. Highly expressed in ovary followed by spleen, thymus, prostate, testes and large intestine. Weakly expressed in small intestine.

The protein resides in the membrane. It carries out the reaction [hyaluronan](n) + UDP-N-acetyl-alpha-D-glucosamine = N-acetyl-beta-D-glucosaminyl-(1-&gt;4)-[hyaluronan](n) + UDP + H(+). The enzyme catalyses N-acetyl-beta-D-glucosaminyl-(1-&gt;4)-[hyaluronan](n) + UDP-alpha-D-glucuronate = [hyaluronan](n+1) + UDP + H(+). The protein operates within glycan biosynthesis; hyaluronan biosynthesis. Functionally, catalyzes the addition of GlcNAc or GlcUA monosaccharides to the nascent hyaluronan polymer. Therefore, it is essential to hyaluronan synthesis a major component of most extracellular matrices that has a structural role in tissues architectures and regulates cell adhesion, migration and differentiation. This is one of the isozymes catalyzing that reaction. Also able to catalyze the synthesis of chito-oligosaccharide depending on the substrate. This Homo sapiens (Human) protein is Hyaluronan synthase 1 (HAS1).